Reading from the N-terminus, the 177-residue chain is Thioredoxin M-type, chloroplastic (177 aa).

Residues 1–64 constitute a chloroplast transit peptide; that stretch reads MAAFTCTSSP…SRLRRGGIIC (64 aa). Residues 65 to 177 enclose the Thioredoxin domain; sequence EAQDTATGIP…LATSIDKFLQ (113 aa). Residues C101 and C104 each act as nucleophile in the active site. An intrachain disulfide couples C101 to C104.

The protein belongs to the thioredoxin family. Plant M-type subfamily. Forms a complex with heterodimeric ferredoxin-thioredoxin reductase (FTR) and ferredoxin.

It localises to the plastid. The protein resides in the chloroplast. Participates in various redox reactions through the reversible oxidation of the active center dithiol to a disulfide. The M form is known to activate NADP-malate dehydrogenase. This chain is Thioredoxin M-type, chloroplastic, found in Brassica napus (Rape).